We begin with the raw amino-acid sequence, 128 residues long: Glyoxylase-like domain-containing protein (128 aa).

Residues 6 to 125 (QISGIEIPAT…EGNTHAICTR (120 aa)) enclose the VOC domain.

It functions in the pathway mycotoxin biosynthesis. Functionally, glyoxylase-like domain-containing protein; part of the gene cluster that mediates the biosynthesis of the selective antifungal agent ascochitine, an o-quinone methide that plays a possible protective role against other microbial competitors in nature and is considered to be important for pathogenicity of legume-associated Didymella species. The pathway probably begins with the synthesis of a keto-aldehyde intermediate by the ascochitine non-reducing polyketide synthase pksAC from successive condensations of 4 malonyl-CoA units, presumably with a simple acetyl-CoA starter unit. Release of the keto-aldehyde intermediate is consistent with the presence of the C-terminal reductive release domain. The HR-PKS (orf7) probably makes a diketide starter unit which is passed to the non-reducing polyketide synthase pksAC for further extension, producing ascochital and ascochitine. The aldehyde dehydrogenase (orf1), the 2-oxoglutarate-dependent dioxygenase (orf3) and the dehydrogenase (orf9) are probably involved in subsequent oxidations of methyl groups to the carboxylic acid of the heterocyclic ring. The ascochitine gene cluster also includes a gene encoding a short peptide with a cupin domain (orf2) that is often found in secondary metabolite gene clusters and which function has still to be determined. The sequence is that of Glyoxylase-like domain-containing protein from Didymella fabae (Leaf and pod spot disease fungus).